An 84-amino-acid polypeptide reads, in one-letter code: Xenoxin-1 (84 aa).

Residues 1–18 form the signal peptide; that stretch reads MRYAIVFFLVCVITLGEA. Disulfide bonds link Cys21–Cys42, Cys35–Cys55, Cys61–Cys76, and Cys77–Cys82.

In terms of tissue distribution, expressed by the skin dorsal glands.

Its subcellular location is the secreted. Functionally, lacks alpha-neurotoxic activity, has apparently no antibacterial activity, nor anti-coagulant potency. The sequence is that of Xenoxin-1 (xenoxin-1) from Xenopus laevis (African clawed frog).